We begin with the raw amino-acid sequence, 376 residues long: Alanine racemase (376 aa).

The active-site Proton acceptor; specific for D-alanine is the K40. Residue K40 is modified to N6-(pyridoxal phosphate)lysine. Residue R138 coordinates substrate. Catalysis depends on Y270, which acts as the Proton acceptor; specific for L-alanine. Substrate is bound at residue M317.

This sequence belongs to the alanine racemase family. Pyridoxal 5'-phosphate serves as cofactor.

It carries out the reaction L-alanine = D-alanine. The protein operates within amino-acid biosynthesis; D-alanine biosynthesis; D-alanine from L-alanine: step 1/1. In terms of biological role, catalyzes the interconversion of L-alanine and D-alanine. May also act on other amino acids. This Lactobacillus delbrueckii subsp. bulgaricus (strain ATCC 11842 / DSM 20081 / BCRC 10696 / JCM 1002 / NBRC 13953 / NCIMB 11778 / NCTC 12712 / WDCM 00102 / Lb 14) protein is Alanine racemase (alr).